Here is a 151-residue protein sequence, read N- to C-terminus: Calcium-binding protein SPEC 2C (151 aa).

4 consecutive EF-hand domains span residues 10-45 (EQRK…IEIE), 46-78 (LTQE…KAEQ), 81-116 (GKGA…CTDP), and 118-151 (MTKE…QSSY). Ca(2+)-binding residues include Asp-23, Asp-25, Asp-27, Lys-29, Glu-34, Asp-59, Asp-61, Ser-63, Glu-70, Asp-94, Asp-96, Ser-98, Ser-100, Glu-105, Asp-131, Asp-135, Glu-137, and Glu-142.

In terms of tissue distribution, found in cell lineages giving rise to the aboral ectoderm, a squamous epithelium covering the surface of the late stage embryo and larva.

Its function is as follows. Calcium-binding protein involved in larval development and metamorphosis. Likely to function as calcium buffers mediating the transport of calcium from the sea water to the blastocoel where calcium is required for skeleton formation. This is Calcium-binding protein SPEC 2C (SPEC2C) from Strongylocentrotus purpuratus (Purple sea urchin).